The sequence spans 1647 residues: Cortactin-binding protein 2 (1647 aa).

Disordered regions lie at residues 1–27 (MATDGASCEPDASRAPEEAAGATAEAA), 202–222 (EKKKTNELEEELSAEKRRSTE), 318–427 (HVKK…QPGL), 440–468 (GNANDPDQNGNTTQSPPSRDVSPTSRDNL), and 482–604 (LSRF…PSID). Residues 120-276 (KMQERMATQL…EQLKRGSDSK (157 aa)) adopt a coiled-coil conformation. The segment covering 362–372 (SSAPSLPPASA) has biased composition (low complexity). The span at 379 to 388 (GPSTGSTADL) shows a compositional bias: polar residues. Residues 389 to 411 (PSSTAPAPGSAAQSPVAAALGPA) show a composition bias toward low complexity. Polar residues predominate over residues 440 to 466 (GNANDPDQNGNTTQSPPSRDVSPTSRD). Arg-484 carries the post-translational modification Asymmetric dimethylarginine. Low complexity predominate over residues 488–509 (PAVGAAPRPGAPPTGDAGAYPP). A compositionally biased stretch (polar residues) spans 569 to 579 (TVASPPSSLPQ). 5 ANK repeats span residues 695–725 (GRPTLLQQAAAQGNVTLLSMLLNEEGLDINY), 729–758 (DGHSALYSAAKNGHTDCVRLLLNAEAQVNA), 762–791 (NGFTPLCAAAAQGHFECVELLIAYDANINH), 795–824 (GGQTPLYLACKNGNKECIKLLLEAGTDRSV), and 828–857 (DGWTPVHAAVDTGNVDSLKLLMYHRAPAHG). Residues 856–886 (HGNSLNEEEPESDVSDLDDGEESSEGESKPV) are disordered. The segment covering 861-880 (NEEEPESDVSDLDDGEESSE) has biased composition (acidic residues). One copy of the ANK 6 repeat lies at 898–928 (EGWTAAHIAASKGFKNCLEILCRHRGLEPER). The segment at 1436–1467 (ENGAWRKVNTSPRRKSGRFSSPTWNKPDLSNE) is disordered. Ser-1509 is subject to Phosphoserine. The disordered stretch occupies residues 1542–1647 (RTFDSSGNNP…HKNEQTHRKT (106 aa)). 2 stretches are compositionally biased toward polar residues: residues 1544–1559 (FDSSGNNPAFSATVNN) and 1567–1584 (KEVSPLSSHQTTECSNNK). Residues 1609–1623 (SQNTKRSSSSSNTRQ) are compositionally biased toward low complexity. Basic and acidic residues predominate over residues 1630–1647 (SKEENWNLHKNEQTHRKT).

Interacts with CTTN/cortactin SH3 domain. Interacts with STRN, STRN4/zinedin and MOB4/phocein; this interactions mediate the association with the STRIPAK core complex and may regulate dendritic spine distribution of the STRIPAK complex in hippocampal neurons. Activation of glutamate receptors weakens the interaction with STRN and STRN4.

It localises to the cytoplasm. It is found in the cell cortex. The protein resides in the cell projection. Its subcellular location is the dendritic spine. Regulates the dendritic spine distribution of CTTN/cortactin in hippocampal neurons, and thus controls dendritic spinogenesis and dendritic spine maintenance. Associates with the striatin-interacting phosphatase and kinase (STRIPAK) core complex to regulate dendritic spine distribution of the STRIPAK complex in hippocampal neurons. The polypeptide is Cortactin-binding protein 2 (CTTNBP2) (Microcebus murinus (Gray mouse lemur)).